A 218-amino-acid chain; its full sequence is Cytochrome b6 (218 aa).

A helical transmembrane segment spans residues 35 to 55 (IFYCLGGITLVCFLIQFATGF). Cysteine 38 provides a ligand contact to heme c. Residues histidine 89 and histidine 103 each coordinate heme b. The next 3 helical transmembrane spans lie at 93–113 (ASMMVLMLILHVFRVYLTGGF), 119–139 (LTWITGVVMAVITVAFGVTGY), and 189–209 (LHTFVMPWLLAVFMLMHFLMI). Residues histidine 190 and histidine 205 each contribute to the heme b site.

This sequence belongs to the cytochrome b family. PetB subfamily. The 4 large subunits of the cytochrome b6-f complex are cytochrome b6, subunit IV (17 kDa polypeptide, PetD), cytochrome f and the Rieske protein, while the 4 small subunits are PetG, PetL, PetM and PetN. The complex functions as a dimer. Heme b serves as cofactor. It depends on heme c as a cofactor.

The protein localises to the cellular thylakoid membrane. Component of the cytochrome b6-f complex, which mediates electron transfer between photosystem II (PSII) and photosystem I (PSI), cyclic electron flow around PSI, and state transitions. This chain is Cytochrome b6, found in Prochlorococcus marinus (strain NATL1A).